A 359-amino-acid polypeptide reads, in one-letter code: Heat-inducible transcription repressor HrcA (359 aa).

It belongs to the HrcA family.

In terms of biological role, negative regulator of class I heat shock genes (grpE-dnaK-dnaJ and groELS operons). Prevents heat-shock induction of these operons. This is Heat-inducible transcription repressor HrcA from Roseiflexus sp. (strain RS-1).